The chain runs to 576 residues: Epsin-1 (576 aa).

A 1,2-diacyl-sn-glycero-3-phospho-(1D-myo-inositol-4,5-bisphosphate)-binding residues include R8, K11, R25, N30, R63, and H73. Residues 12-144 form the ENTH domain; that stretch reads NIVHNYSEAE…RDEDRLREER (133 aa). Residues 149-185 form a disordered region; sequence KTKEKLAQTATASSAAVGSGPPPEAEQAWPQSSGEEE. Positions 157–167 are enriched in low complexity; sequence TATASSAAVGS. 3 UIM domains span residues 183-202, 208-227, and 233-252; these read EEEL…ADQP, EDDA…HDKE, and GDDL…TGGK. Over residues 265–296 the composition is skewed to low complexity; the sequence is TAPAPAPTTDPWGGPAPMAAAVPTAAPTSDPW. A disordered region spans residues 265 to 404; sequence TAPAPAPTTD…GGFDTEPDEF (140 aa). 8 tandem repeats follow at residues 274–276, 294–296, 306–308, 319–321, 332–334, 349–351, 367–369, and 377–379. The segment at 274-379 is 8 X 3 AA repeats of [ED]-P-W; sequence DPWGGPAPMA…TPAPAFSDPW (106 aa). A compositionally biased stretch (pro residues) spans 297–314; the sequence is GGPPVPPAADPWGGPAPT. Positions 332–368 are enriched in low complexity; sequence DPWGGTPAPAAGEGPTPDPWGSSDGGVPVSGPSASDP. Residue S382 is modified to Phosphoserine; by CDK1. Residues 402–411 carry the [DE]-X(1,2)-F-X-X-[FL]-X-X-X-R motif motif; that stretch reads DEFSDFDRLR. A phosphoserine mark is found at S419, S420, S435, S447, and S454. A disordered region spans residues 448-576; the sequence is LAEAVGSPPP…PAPNTNPFLL (129 aa). The segment covering 454 to 468 has biased composition (pro residues); sequence SPPPAATPTPTPPTR. T460, T464, and T470 each carry phosphothreonine. A Phosphoserine modification is found at S473. T494 is subject to Phosphothreonine. 2 tandem repeats follow at residues 502–504 and 518–520. The segment at 502–574 is 3 X 3 AA repeats of N-P-F; that stretch reads NPFLPGGGPA…GPPAPNTNPF (73 aa). Omega-N-methylarginine is present on R534. Pro residues predominate over residues 557 to 570; sequence GLPPMMPPGPPAPN. The stretch at 572-574 is repeat 3; sequence NPF.

It belongs to the epsin family. As to quaternary structure, monomer. Binds clathrin, ZBTB16/ZNF145 and ITSN1. Binds ubiquitinated proteins. Binds AP2A1 and AP2A2. Interacts with RALBP1 in a complex also containing NUMB and TFAP2A during interphase and mitosis. Interacts with AP2B1. Interacts with UBQLN2. Interacts with REPS2; the interaction is direct. Interacts with EPS15; the interaction is direct. Interacts with ENTREP1. Post-translationally, phosphorylated on serine and/or threonine residues in mitotic cells. Phosphorylation reduces interaction with REPS2, AP-2 and the membrane fraction. Depolarization of synaptosomes results in dephosphorylation. In terms of processing, ubiquitinated.

It localises to the cytoplasm. The protein resides in the cell membrane. It is found in the nucleus. Its subcellular location is the membrane. The protein localises to the clathrin-coated pit. Its function is as follows. Binds to membranes enriched in phosphatidylinositol 4,5-bisphosphate (PtdIns(4,5)P2). Modifies membrane curvature and facilitates the formation of clathrin-coated invaginations. Regulates receptor-mediated endocytosis. This Homo sapiens (Human) protein is Epsin-1 (EPN1).